The primary structure comprises 125 residues: Putative glutaredoxin-C2 (125 aa).

The 102-residue stretch at 2-103 folds into the Glutaredoxin domain; that stretch reads AERVARLSSQ…PLLREAGALW (102 aa). Cysteine 22 and cysteine 25 are oxidised to a cystine.

This sequence belongs to the glutaredoxin family. CC-type subfamily.

It is found in the cytoplasm. Has a glutathione-disulfide oxidoreductase activity in the presence of NADPH and glutathione reductase. Reduces low molecular weight disulfides and proteins. The chain is Putative glutaredoxin-C2 (GRXC2) from Oryza sativa subsp. japonica (Rice).